We begin with the raw amino-acid sequence, 346 residues long: Parapinopsin (346 aa).

The Extracellular segment spans residues 1-29 (MASIILINFSETDTLHLGSVNDHIMPRIG). N-linked (GlcNAc...) asparagine glycosylation occurs at Asn-8. The chain crosses the membrane as a helical span at residues 30-54 (YTILSIIMALSSTFGIILNMVVIIV). The Cytoplasmic segment spans residues 55-66 (TVRYKQLRQPLN). The helical transmembrane segment at 67-91 (YALVNLAVADLGCPVFGGLLTAVTN) threads the bilayer. Topologically, residues 92–106 (AMGYFSLGRVGCVLE) are extracellular. Cys-103 and Cys-180 are oxidised to a cystine. The chain crosses the membrane as a helical span at residues 107 to 126 (GFAVAFFGIAGLCSVAVIAV). Over 127–145 (DRYMVVCRPLGAVMFQTKH) the chain is Cytoplasmic. A helical membrane pass occupies residues 146-169 (ALAGVVFSWVWSFIWNTPPLFGWG). Residues 170–193 (SYQLEGVMTSCAPNWYRRDPVNVS) lie on the Extracellular side of the membrane. N-linked (GlcNAc...) asparagine glycosylation occurs at Asn-191. Residues 194 to 221 (YILCYFMLCFALPFATIIFSYMHLLHTL) form a helical membrane-spanning segment. Over 222-244 (WQVAKLQVADSGSTAKVEVQVAR) the chain is Cytoplasmic. Residues 245 to 268 (MVVIMVMAFLLTWLPYAAFALTVI) form a helical membrane-spanning segment. The Extracellular segment spans residues 269-276 (IDSNIYIN). Residues 277–301 (PVIGTIPAYLAKSSTVFNPIIYIFM) traverse the membrane as a helical segment. An N6-(retinylidene)lysine modification is found at Lys-288. The Cytoplasmic portion of the chain corresponds to 302-346 (NRQFRDYALPCLLCGKNPWAAKEGRDSDTNTLTTTVSKNTSVSPL). A lipid anchor (S-palmitoyl cysteine) is attached at Cys-315. Positions 325 to 346 (GRDSDTNTLTTTVSKNTSVSPL) are disordered. Low complexity predominate over residues 330–346 (TNTLTTTVSKNTSVSPL).

The protein belongs to the G-protein coupled receptor 1 family. Opsin subfamily. Post-translationally, phosphorylated on some or all of the serine and threonine residues present in the C-terminal region. As to expression, parapineal organ.

It is found in the membrane. The polypeptide is Parapinopsin (Ictalurus punctatus (Channel catfish)).